We begin with the raw amino-acid sequence, 77 residues long: Acyl carrier protein (77 aa).

A Carrier domain is found at 2–77 (STVEERVKKI…DAIDYILANQ (76 aa)). Ser-37 carries the O-(pantetheine 4'-phosphoryl)serine modification.

The protein belongs to the acyl carrier protein (ACP) family. 4'-phosphopantetheine is transferred from CoA to a specific serine of apo-ACP by AcpS. This modification is essential for activity because fatty acids are bound in thioester linkage to the sulfhydryl of the prosthetic group.

The protein resides in the cytoplasm. It participates in lipid metabolism; fatty acid biosynthesis. Its function is as follows. Carrier of the growing fatty acid chain in fatty acid biosynthesis. This Hahella chejuensis (strain KCTC 2396) protein is Acyl carrier protein.